A 568-amino-acid polypeptide reads, in one-letter code: Periplasmic trehalase (568 aa).

The N-terminal stretch at Met-1–Ala-38 is a signal peptide. Substrate-binding positions include Arg-169, Trp-176–Asp-177, Asn-213, Arg-222–Gln-224, Arg-294–Glu-296, and Gly-327. Active-site proton donor/acceptor residues include Asp-329 and Glu-511. Residue Glu-526 participates in substrate binding.

Belongs to the glycosyl hydrolase 37 family.

The protein resides in the periplasm. It carries out the reaction alpha,alpha-trehalose + H2O = alpha-D-glucose + beta-D-glucose. Its function is as follows. Provides the cells with the ability to utilize trehalose at high osmolarity by splitting it into glucose molecules that can subsequently be taken up by the phosphotransferase-mediated uptake system. The polypeptide is Periplasmic trehalase (Xanthomonas campestris pv. campestris (strain B100)).